Consider the following 151-residue polypeptide: Acidic phospholipase A2 2 (151 aa).

The N-terminal stretch at 1-27 (MYPAHLLVLLAVCVSLLGAASIPARPL) is a signal peptide. Disulfide bonds link Cys-38-Cys-104, Cys-54-Cys-151, Cys-56-Cys-72, Cys-71-Cys-132, Cys-78-Cys-125, Cys-88-Cys-118, and Cys-111-Cys-123. The Ca(2+) site is built by Tyr-55, Gly-57, and Gly-59. His-75 is a catalytic residue. Position 76 (Asp-76) interacts with Ca(2+). Residue Asp-126 is part of the active site.

It belongs to the phospholipase A2 family. Group I subfamily. D49 sub-subfamily. The cofactor is Ca(2+). Expressed by the venom gland.

The protein localises to the secreted. The catalysed reaction is a 1,2-diacyl-sn-glycero-3-phosphocholine + H2O = a 1-acyl-sn-glycero-3-phosphocholine + a fatty acid + H(+). Its function is as follows. PLA2 catalyzes the calcium-dependent hydrolysis of the 2-acyl groups in 3-sn-phosphoglycerides. In Tropidechis carinatus (Australian rough-scaled snake), this protein is Acidic phospholipase A2 2.